The chain runs to 290 residues: Acetyl-coenzyme A carboxylase carboxyl transferase subunit beta (290 aa).

Residues 27 to 290 enclose the CoA carboxyltransferase N-terminal domain; sequence LWVKCPSCEA…LQRQPADALA (264 aa). Residues Cys-31, Cys-34, Cys-50, and Cys-53 each coordinate Zn(2+). The C4-type zinc finger occupies 31-53; sequence CPSCEAVLYRNDVDANLHVCPKC.

The protein belongs to the AccD/PCCB family. In terms of assembly, acetyl-CoA carboxylase is a heterohexamer composed of biotin carboxyl carrier protein (AccB), biotin carboxylase (AccC) and two subunits each of ACCase subunit alpha (AccA) and ACCase subunit beta (AccD). Zn(2+) serves as cofactor.

Its subcellular location is the cytoplasm. The catalysed reaction is N(6)-carboxybiotinyl-L-lysyl-[protein] + acetyl-CoA = N(6)-biotinyl-L-lysyl-[protein] + malonyl-CoA. Its pathway is lipid metabolism; malonyl-CoA biosynthesis; malonyl-CoA from acetyl-CoA: step 1/1. In terms of biological role, component of the acetyl coenzyme A carboxylase (ACC) complex. Biotin carboxylase (BC) catalyzes the carboxylation of biotin on its carrier protein (BCCP) and then the CO(2) group is transferred by the transcarboxylase to acetyl-CoA to form malonyl-CoA. The protein is Acetyl-coenzyme A carboxylase carboxyl transferase subunit beta of Burkholderia cenocepacia (strain ATCC BAA-245 / DSM 16553 / LMG 16656 / NCTC 13227 / J2315 / CF5610) (Burkholderia cepacia (strain J2315)).